The following is a 412-amino-acid chain: Multifunctional CCA protein (412 aa).

2 residues coordinate ATP: Gly8 and Arg11. 2 residues coordinate CTP: Gly8 and Arg11. Positions 21 and 23 each coordinate Mg(2+). ATP-binding residues include Arg91, Arg137, and Arg140. Residues Arg91, Arg137, and Arg140 each contribute to the CTP site. Residues 228–329 enclose the HD domain; that stretch reads TGIHTLMTLS…VKLFDSIDAW (102 aa).

The protein belongs to the tRNA nucleotidyltransferase/poly(A) polymerase family. Bacterial CCA-adding enzyme type 1 subfamily. As to quaternary structure, monomer. Can also form homodimers and oligomers. It depends on Mg(2+) as a cofactor. Ni(2+) is required as a cofactor.

It catalyses the reaction a tRNA precursor + 2 CTP + ATP = a tRNA with a 3' CCA end + 3 diphosphate. It carries out the reaction a tRNA with a 3' CCA end + 2 CTP + ATP = a tRNA with a 3' CCACCA end + 3 diphosphate. In terms of biological role, catalyzes the addition and repair of the essential 3'-terminal CCA sequence in tRNAs without using a nucleic acid template. Adds these three nucleotides in the order of C, C, and A to the tRNA nucleotide-73, using CTP and ATP as substrates and producing inorganic pyrophosphate. tRNA 3'-terminal CCA addition is required both for tRNA processing and repair. Also involved in tRNA surveillance by mediating tandem CCA addition to generate a CCACCA at the 3' terminus of unstable tRNAs. While stable tRNAs receive only 3'-terminal CCA, unstable tRNAs are marked with CCACCA and rapidly degraded. This chain is Multifunctional CCA protein, found in Escherichia coli (strain SMS-3-5 / SECEC).